Consider the following 553-residue polypeptide: Probable glucomannan 4-beta-mannosyltransferase 1 (553 aa).

A helical membrane pass occupies residues 64-84 (LLPVFKGLVVMCLVLSIIVFF). The active site involves Asp163. Asp222 and Asp224 together coordinate substrate. The active site involves Asp316. The next 4 membrane-spanning stretches (helical) occupy residues 395–415 (VAVH…SVFF), 431–451 (LISI…IFWV), 510–530 (EVMV…YGHT), and 531–551 (WLHF…FGFV).

Belongs to the glycosyltransferase 2 family. Plant cellulose synthase-like A subfamily.

The protein localises to the golgi apparatus membrane. The enzyme catalyses GDP-mannose + (glucomannan)n = GDP + (glucomannan)n+1.. Functionally, probable mannan synthase which consists of a 4-beta-mannosyltransferase activity on mannan using GDP-mannose. The beta-1,4-mannan product is the backbone for galactomannan synthesis by galactomannan galactosyltransferase. Galactomannan is a noncellulosic polysaccharides of plant cell wall. The protein is Probable glucomannan 4-beta-mannosyltransferase 1 of Arabidopsis thaliana (Mouse-ear cress).